The primary structure comprises 507 residues: uncharacterized protein (507 aa).

Disordered stretches follow at residues 91–162 (NEKT…KKLL), 174–255 (EKLQ…QQQQ), and 309–422 (KRKL…NYST). Acidic residues predominate over residues 116–143 (DSSESDSSESESDSSESESESESNETSE). Over residues 144-155 (NESSSSSEPESS) the composition is skewed to low complexity. Residues 174-193 (EKLQQEQQKQKEAQKPKEKP) are compositionally biased toward basic and acidic residues. 3 stretches are compositionally biased toward low complexity: residues 194 to 236 (QQQQ…QQIE), 243 to 255 (PQQQ…QQQQ), and 313 to 350 (QSQL…TNKP). The span at 351-360 (LSKRQKKLLK) shows a compositional bias: basic residues. Residues 378 to 409 (NNKNDNSTNDSNNNNDNNNNNKNDTNDSNNDD) show a composition bias toward low complexity.

This is an uncharacterized protein from Dictyostelium discoideum (Social amoeba).